Reading from the N-terminus, the 133-residue chain is Small ribosomal subunit protein uS11 (133 aa).

It belongs to the universal ribosomal protein uS11 family. Part of the 30S ribosomal subunit. Interacts with proteins S7 and S18. Binds to IF-3.

Functionally, located on the platform of the 30S subunit, it bridges several disparate RNA helices of the 16S rRNA. Forms part of the Shine-Dalgarno cleft in the 70S ribosome. This Christiangramia forsetii (strain DSM 17595 / CGMCC 1.15422 / KT0803) (Gramella forsetii) protein is Small ribosomal subunit protein uS11.